The chain runs to 76 residues: Exodeoxyribonuclease 7 small subunit (76 aa).

This sequence belongs to the XseB family. In terms of assembly, heterooligomer composed of large and small subunits.

It localises to the cytoplasm. The catalysed reaction is Exonucleolytic cleavage in either 5'- to 3'- or 3'- to 5'-direction to yield nucleoside 5'-phosphates.. Its function is as follows. Bidirectionally degrades single-stranded DNA into large acid-insoluble oligonucleotides, which are then degraded further into small acid-soluble oligonucleotides. In Methylococcus capsulatus (strain ATCC 33009 / NCIMB 11132 / Bath), this protein is Exodeoxyribonuclease 7 small subunit.